Reading from the N-terminus, the 221-residue chain is Ribonuclease HII (221 aa).

One can recognise an RNase H type-2 domain in the interval 29–220; it reads RRVAGVDEVG…LRDLQAGEIG (192 aa). The a divalent metal cation site is built by aspartate 35, glutamate 36, and aspartate 129. The disordered stretch occupies residues 198–221; sequence LGPSPQHRRSFAPLRDLQAGEIGG.

Belongs to the RNase HII family. The cofactor is Mn(2+). Requires Mg(2+) as cofactor.

Its subcellular location is the cytoplasm. It carries out the reaction Endonucleolytic cleavage to 5'-phosphomonoester.. Its function is as follows. Endonuclease that specifically degrades the RNA of RNA-DNA hybrids. The polypeptide is Ribonuclease HII (Synechococcus sp. (strain JA-3-3Ab) (Cyanobacteria bacterium Yellowstone A-Prime)).